The primary structure comprises 195 residues: Pyruvoyl-dependent arginine decarboxylase AaxB (195 aa).

S53 carries the pyruvic acid (Ser) modification.

It belongs to the pyruvoyl-dependent arginine decarboxylase family. In terms of assembly, trimer of an alpha-beta dimer. Requires pyruvate as cofactor.

Its subcellular location is the cytoplasm. It catalyses the reaction L-arginine + H(+) = agmatine + CO2. Its activity is regulated as follows. Inhibited by argininamide. Part of the AaxABC system, catalyzes the decarboxylation of L-arginine. The arginine uptake by the bacterium in the macrophage may be a virulence factor against the host innate immune response. In Chlamydia pneumoniae (Chlamydophila pneumoniae), this protein is Pyruvoyl-dependent arginine decarboxylase AaxB (aaxB).